A 354-amino-acid chain; its full sequence is Tetraacyldisaccharide 4'-kinase (354 aa).

53–60 (AWGGTGKT) provides a ligand contact to ATP.

Belongs to the LpxK family.

It catalyses the reaction a lipid A disaccharide + ATP = a lipid IVA + ADP + H(+). It functions in the pathway glycolipid biosynthesis; lipid IV(A) biosynthesis; lipid IV(A) from (3R)-3-hydroxytetradecanoyl-[acyl-carrier-protein] and UDP-N-acetyl-alpha-D-glucosamine: step 6/6. Functionally, transfers the gamma-phosphate of ATP to the 4'-position of a tetraacyldisaccharide 1-phosphate intermediate (termed DS-1-P) to form tetraacyldisaccharide 1,4'-bis-phosphate (lipid IVA). The protein is Tetraacyldisaccharide 4'-kinase of Nitratidesulfovibrio vulgaris (strain ATCC 29579 / DSM 644 / CCUG 34227 / NCIMB 8303 / VKM B-1760 / Hildenborough) (Desulfovibrio vulgaris).